The following is a 191-amino-acid chain: uncharacterized protein (191 aa).

This is an uncharacterized protein from Arabidopsis thaliana (Mouse-ear cress).